The following is a 295-amino-acid chain: uncharacterized protein (295 aa).

The HTH araC/xylS-type domain maps to 8–106 (QKTINWIESH…HMPPGAYRTF (99 aa)). The H-T-H motif DNA-binding region spans 25–46 (EDIVNVSSFSKFHFHRIFQKEV).

In terms of biological role, probable transcriptional regulator. This is an uncharacterized protein from Bacillus subtilis (strain 168).